The chain runs to 300 residues: Ribosomal protein bS6--L-glutamate ligase (300 aa).

In terms of domain architecture, ATP-grasp spans Leu-104–Glu-287. ATP is bound by residues Lys-141, Glu-178–Tyr-179, Asp-187, and Arg-211–Asn-213. 3 residues coordinate Mg(2+): Asp-248, Glu-260, and Asn-262. Mn(2+)-binding residues include Asp-248, Glu-260, and Asn-262.

It belongs to the RimK family. Mg(2+) is required as a cofactor. The cofactor is Mn(2+).

Its function is as follows. An L-glutamate ligase that catalyzes the ATP-dependent post-translational addition of glutamate residues to the C-terminus of ribosomal protein bS6 (RpsF). Is also able to catalyze the synthesis of poly-alpha-glutamate in vitro, via ATP hydrolysis from unprotected glutamate as substrate. The number of glutamate residues added to either RpsF or to poly-alpha-glutamate changes with pH. The protein is Ribosomal protein bS6--L-glutamate ligase of Salmonella schwarzengrund (strain CVM19633).